The primary structure comprises 381 residues: Anhydro-N-acetylmuramic acid kinase (381 aa).

22–29 is a binding site for ATP; it reads GTSIDGID.

Belongs to the anhydro-N-acetylmuramic acid kinase family.

It carries out the reaction 1,6-anhydro-N-acetyl-beta-muramate + ATP + H2O = N-acetyl-D-muramate 6-phosphate + ADP + H(+). Its pathway is amino-sugar metabolism; 1,6-anhydro-N-acetylmuramate degradation. It functions in the pathway cell wall biogenesis; peptidoglycan recycling. Its function is as follows. Catalyzes the specific phosphorylation of 1,6-anhydro-N-acetylmuramic acid (anhMurNAc) with the simultaneous cleavage of the 1,6-anhydro ring, generating MurNAc-6-P. Is required for the utilization of anhMurNAc either imported from the medium or derived from its own cell wall murein, and thus plays a role in cell wall recycling. The polypeptide is Anhydro-N-acetylmuramic acid kinase (Xylella fastidiosa (strain Temecula1 / ATCC 700964)).